A 485-amino-acid polypeptide reads, in one-letter code: Ribulose bisphosphate carboxylase large chain (485 aa).

Residues N124 and T174 each contribute to the substrate site. Residue K176 is the Proton acceptor of the active site. K178 is a substrate binding site. Positions 202, 204, and 205 each coordinate Mg(2+). Position 202 is an N6-carboxylysine (K202). H294 (proton acceptor) is an active-site residue. Substrate-binding residues include R295, H327, and S379.

It belongs to the RuBisCO large chain family. Type I subfamily. As to quaternary structure, heterohexadecamer of 8 large chains and 8 small chains. It depends on Mg(2+) as a cofactor.

It carries out the reaction 2 (2R)-3-phosphoglycerate + 2 H(+) = D-ribulose 1,5-bisphosphate + CO2 + H2O. The enzyme catalyses D-ribulose 1,5-bisphosphate + O2 = 2-phosphoglycolate + (2R)-3-phosphoglycerate + 2 H(+). Its function is as follows. RuBisCO catalyzes two reactions: the carboxylation of D-ribulose 1,5-bisphosphate, the primary event in carbon dioxide fixation, as well as the oxidative fragmentation of the pentose substrate. Both reactions occur simultaneously and in competition at the same active site. This chain is Ribulose bisphosphate carboxylase large chain, found in Rhodopseudomonas palustris (strain TIE-1).